Reading from the N-terminus, the 329-residue chain is GTPase Obg (329 aa).

The Obg domain maps to 1–159; sequence MQFIDQARIT…WFLQLELKLL (159 aa). Residues 160–328 form the OBG-type G domain; that stretch reads AEVGIIGLPN…LLAQVWKELG (169 aa). ATP contacts are provided by residues 166–173, 191–195, 213–216, 280–283, and 309–311; these read GLPNAGKS, FTTLV, DIPG, NKQE, and SAA. Mg(2+)-binding residues include Ser-173 and Thr-193.

The protein belongs to the TRAFAC class OBG-HflX-like GTPase superfamily. OBG GTPase family. As to quaternary structure, monomer. The cofactor is Mg(2+).

It localises to the cytoplasm. Its function is as follows. An essential GTPase which binds GTP, GDP and possibly (p)ppGpp with moderate affinity, with high nucleotide exchange rates and a fairly low GTP hydrolysis rate. Plays a role in control of the cell cycle, stress response, ribosome biogenesis and in those bacteria that undergo differentiation, in morphogenesis control. In Prochlorococcus marinus (strain MIT 9313), this protein is GTPase Obg.